Here is a 315-residue protein sequence, read N- to C-terminus: Zinc finger protein 691 (315 aa).

Residues 1-10 (MSLCSPTHSA) are compositionally biased toward polar residues. A disordered region spans residues 1–90 (MSLCSPTHSA…QETHPKKPWQ (90 aa)). Positions 33–58 (GSEKEQSPEPHLPEEGEGGKPWRVDD) are enriched in basic and acidic residues. Serine 39, serine 75, and serine 77 each carry phosphoserine. A Glycyl lysine isopeptide (Lys-Gly) (interchain with G-Cter in SUMO2) cross-link involves residue lysine 113. C2H2-type zinc fingers lie at residues 115 to 137 (FICA…QRIH), 143 to 165 (YKCS…ERIH), 171 to 193 (YKCP…QQDH), 199 to 221 (YRCD…HRTH), 227 to 249 (YICC…HRTH), 255 to 277 (YECT…QRTH), and 283 to 305 (YRCT…QKTH).

The protein belongs to the krueppel C2H2-type zinc-finger protein family.

It localises to the nucleus. Functionally, may be involved in transcriptional regulation. This Homo sapiens (Human) protein is Zinc finger protein 691 (ZNF691).